Consider the following 155-residue polypeptide: Small ribosomal subunit protein uS9 (155 aa).

Belongs to the universal ribosomal protein uS9 family.

In Rhizobium meliloti (strain 1021) (Ensifer meliloti), this protein is Small ribosomal subunit protein uS9.